The sequence spans 427 residues: 3-phosphoshikimate 1-carboxyvinyltransferase (427 aa).

Residues Lys-20, Ser-21, and Arg-25 each coordinate 3-phosphoshikimate. Lys-20 is a phosphoenolpyruvate binding site. Gly-92 and Arg-120 together coordinate phosphoenolpyruvate. Ser-166, Gln-168, Asp-312, and Lys-339 together coordinate 3-phosphoshikimate. Gln-168 contributes to the phosphoenolpyruvate binding site. Asp-312 serves as the catalytic Proton acceptor. Phosphoenolpyruvate is bound by residues Arg-343 and Arg-385.

It belongs to the EPSP synthase family. Monomer.

The protein localises to the cytoplasm. The catalysed reaction is 3-phosphoshikimate + phosphoenolpyruvate = 5-O-(1-carboxyvinyl)-3-phosphoshikimate + phosphate. It functions in the pathway metabolic intermediate biosynthesis; chorismate biosynthesis; chorismate from D-erythrose 4-phosphate and phosphoenolpyruvate: step 6/7. Functionally, catalyzes the transfer of the enolpyruvyl moiety of phosphoenolpyruvate (PEP) to the 5-hydroxyl of shikimate-3-phosphate (S3P) to produce enolpyruvyl shikimate-3-phosphate and inorganic phosphate. This is 3-phosphoshikimate 1-carboxyvinyltransferase from Streptococcus equi subsp. zooepidemicus (strain H70).